The chain runs to 1031 residues: Protein translocase subunit SecA (1031 aa).

Residues glutamine 143, glycine 161–threonine 165, and aspartate 661 contribute to the ATP site. The span at lysine 963 to serine 973 shows a compositional bias: basic and acidic residues. Residues lysine 963 to arginine 1031 form a disordered region. Cysteine 1017, cysteine 1019, cysteine 1028, and cysteine 1029 together coordinate Zn(2+).

Belongs to the SecA family. Monomer and homodimer. Part of the essential Sec protein translocation apparatus which comprises SecA, SecYEG and auxiliary proteins SecDF. Other proteins may also be involved. Requires Zn(2+) as cofactor.

It is found in the cell inner membrane. Its subcellular location is the cytoplasm. The enzyme catalyses ATP + H2O + cellular proteinSide 1 = ADP + phosphate + cellular proteinSide 2.. Functionally, part of the Sec protein translocase complex. Interacts with the SecYEG preprotein conducting channel. Has a central role in coupling the hydrolysis of ATP to the transfer of proteins into and across the cell membrane, serving as an ATP-driven molecular motor driving the stepwise translocation of polypeptide chains across the membrane. The chain is Protein translocase subunit SecA from Prosthecochloris aestuarii (strain DSM 271 / SK 413).